We begin with the raw amino-acid sequence, 102 residues long: ATP-dependent Clp protease adapter protein ClpS (102 aa).

This sequence belongs to the ClpS family. Binds to the N-terminal domain of the chaperone ClpA.

In terms of biological role, involved in the modulation of the specificity of the ClpAP-mediated ATP-dependent protein degradation. This chain is ATP-dependent Clp protease adapter protein ClpS, found in Wolinella succinogenes (strain ATCC 29543 / DSM 1740 / CCUG 13145 / JCM 31913 / LMG 7466 / NCTC 11488 / FDC 602W) (Vibrio succinogenes).